A 343-amino-acid chain; its full sequence is Protein RecA (343 aa).

65–72 provides a ligand contact to ATP; sequence GPESSGKT.

The protein belongs to the RecA family.

The protein resides in the cytoplasm. Functionally, can catalyze the hydrolysis of ATP in the presence of single-stranded DNA, the ATP-dependent uptake of single-stranded DNA by duplex DNA, and the ATP-dependent hybridization of homologous single-stranded DNAs. It interacts with LexA causing its activation and leading to its autocatalytic cleavage. In Campylobacter jejuni subsp. jejuni serotype O:6 (strain 81116 / NCTC 11828), this protein is Protein RecA.